The primary structure comprises 306 residues: Pantothenate kinase (306 aa).

91-98 is an ATP binding site; that stretch reads GSVAVGKS.

Belongs to the prokaryotic pantothenate kinase family.

Its subcellular location is the cytoplasm. The catalysed reaction is (R)-pantothenate + ATP = (R)-4'-phosphopantothenate + ADP + H(+). It participates in cofactor biosynthesis; coenzyme A biosynthesis; CoA from (R)-pantothenate: step 1/5. The chain is Pantothenate kinase from Streptococcus pneumoniae serotype 2 (strain D39 / NCTC 7466).